Consider the following 241-residue polypeptide: MLYKTKAITLYNINYNDNYSIVHVLTEEFGPVSYLTAKFKKQKTHLSKSFFHPLSLVELEVEHKNLREIQYIKEAKTYIPLVSLLNNPIKSSICIFLAEFISKALKEKQSDKLLFNYILQSIQVLEFIEKNYSNFHLVFTIRLSQFLGFYPNNTDYSKGMYFDMQNGIFVQQQPPHTHFVHSDDSWIVAKLLQMNYENMFHFQFTRNERKKIISQILEYYYLHLGGFSKIKSLAILHSVFD.

This sequence belongs to the RecO family.

Involved in DNA repair and RecF pathway recombination. The protein is DNA repair protein RecO of Azobacteroides pseudotrichonymphae genomovar. CFP2.